The chain runs to 374 residues: Alcohol dehydrogenase class-3 (374 aa).

Position 2 is an N-acetylalanine (alanine 2). Zn(2+)-binding residues include cysteine 45, histidine 67, cysteine 97, cysteine 100, cysteine 103, cysteine 111, and cysteine 174. Lysine 233 bears the N6-succinyllysine mark. Residue serine 247 is modified to Phosphoserine. Lysine 315 is subject to N6-succinyllysine. A phosphoserine mark is found at serine 324 and serine 351.

The protein belongs to the zinc-containing alcohol dehydrogenase family. Class-III subfamily. In terms of assembly, homodimer. Requires Zn(2+) as cofactor.

It is found in the cytoplasm. The catalysed reaction is a primary alcohol + NAD(+) = an aldehyde + NADH + H(+). It carries out the reaction a secondary alcohol + NAD(+) = a ketone + NADH + H(+). The enzyme catalyses S-(hydroxymethyl)glutathione + NADP(+) = S-formylglutathione + NADPH + H(+). It catalyses the reaction S-(hydroxymethyl)glutathione + NAD(+) = S-formylglutathione + NADH + H(+). The catalysed reaction is 20-oxo-(5Z,8Z,11Z,14Z)-eicosatetraenoate + NAD(+) + H2O = (5Z,8Z,11Z,14Z)-eicosatetraenedioate + NADH + 2 H(+). It carries out the reaction 20-hydroxy-(5Z,8Z,11Z,14Z)-eicosatetraenoate + NAD(+) = 20-oxo-(5Z,8Z,11Z,14Z)-eicosatetraenoate + NADH + H(+). The enzyme catalyses S-nitrosoglutathione + NADH + H(+) = S-(hydroxysulfenamide)glutathione + NAD(+). Catalyzes the oxidation of long-chain primary alcohols and the oxidation of S-(hydroxymethyl) glutathione. Also oxidizes long chain omega-hydroxy fatty acids, such as 20-HETE, producing both the intermediate aldehyde, 20-oxoarachidonate and the end product, a dicarboxylic acid, (5Z,8Z,11Z,14Z)-eicosatetraenedioate. Class-III ADH is remarkably ineffective in oxidizing ethanol. Required for clearance of cellular formaldehyde, a cytotoxic and carcinogenic metabolite that induces DNA damage. Also acts as a S-nitroso-glutathione reductase by catalyzing the NADH-dependent reduction of S-nitrosoglutathione, thereby regulating protein S-nitrosylation. In Homo sapiens (Human), this protein is Alcohol dehydrogenase class-3.